Reading from the N-terminus, the 360-residue chain is tRNA (guanine(9)-N1)-methyltransferase (360 aa).

A disordered region spans residues 1 to 77 (MENQDTEQSQ…RRKERIKEAE (77 aa)). 2 stretches are compositionally biased toward basic and acidic residues: residues 8-24 (QSQK…DFKR) and 33-55 (MTKR…DEYK). The span at 56–67 (QKKREKKKAARE) shows a compositional bias: basic residues. Residues 68-77 (RRKERIKEAE) are compositionally biased toward basic and acidic residues. Residues 94–293 (RAKVAPQEQI…EVLPPRKVKG (200 aa)) form the SAM-dependent MTase TRM10-type domain. S-adenosyl-L-methionine-binding positions include 199–200 (LT), glycine 219, 223–227 (DKNRY), cysteine 231, leucine 245, and 257–259 (QVL). The active-site Proton acceptor is aspartate 223. The disordered stretch occupies residues 291 to 360 (VKGKLTHGSD…SDEPSKGADH (70 aa)). Positions 297–306 (HGSDPEKSIE) are enriched in basic and acidic residues. Residues 307–324 (PSEVSEQPVSSEQSEQPV) are compositionally biased toward low complexity. Residues 328 to 343 (QPVSSEQPVLSEQPVL) show a composition bias toward polar residues.

It belongs to the class IV-like SAM-binding methyltransferase superfamily. TRM10 family. In terms of assembly, monomer.

It localises to the cytoplasm. The protein localises to the nucleus. It carries out the reaction guanosine(9) in tRNA + S-adenosyl-L-methionine = N(1)-methylguanosine(9) in tRNA + S-adenosyl-L-homocysteine + H(+). Its function is as follows. S-adenosyl-L-methionine-dependent guanine N(1)-methyltransferase that catalyzes the formation of N(1)-methylguanine at position 9 (m1G9) in cytoplasmic tRNA. This is tRNA (guanine(9)-N1)-methyltransferase from Debaryomyces hansenii (strain ATCC 36239 / CBS 767 / BCRC 21394 / JCM 1990 / NBRC 0083 / IGC 2968) (Yeast).